Here is a 183-residue protein sequence, read N- to C-terminus: Peptide deformylase (183 aa).

Fe cation-binding residues include Cys-111 and His-154. Glu-155 is a catalytic residue. His-158 is a Fe cation binding site.

Belongs to the polypeptide deformylase family. The cofactor is Fe(2+).

It carries out the reaction N-terminal N-formyl-L-methionyl-[peptide] + H2O = N-terminal L-methionyl-[peptide] + formate. Its function is as follows. Removes the formyl group from the N-terminal Met of newly synthesized proteins. Requires at least a dipeptide for an efficient rate of reaction. N-terminal L-methionine is a prerequisite for activity but the enzyme has broad specificity at other positions. The protein is Peptide deformylase of Staphylococcus epidermidis (strain ATCC 35984 / DSM 28319 / BCRC 17069 / CCUG 31568 / BM 3577 / RP62A).